Consider the following 239-residue polypeptide: Cysteine-rich venom protein kaouthin-1 (239 aa).

Positions 1–18 (MIAFSLLCLAAVLRQSFG) are cleaved as a signal peptide. In terms of domain architecture, SCP spans 37–165 (VDLHNSLRRR…AWSYFYVCQY (129 aa)). Intrachain disulfides connect Cys-74–Cys-152, Cys-91–Cys-166, Cys-147–Cys-163, Cys-185–Cys-192, Cys-188–Cys-197, Cys-201–Cys-234, Cys-210–Cys-228, and Cys-219–Cys-232. The region spanning 201 to 234 (CTIYNKLTNCDSLLKQGSCQDDWIKSNCPASCFC) is the ShKT domain.

Belongs to the CRISP family. As to expression, expressed by the venom gland.

Its subcellular location is the secreted. Inhibits calcium-activated potassium channels (KCa), voltage-gated potassium channel (Kv), and the calcium release channel/ryanodine receptor (RyR). In Naja kaouthia (Monocled cobra), this protein is Cysteine-rich venom protein kaouthin-1.